A 327-amino-acid polypeptide reads, in one-letter code: Biotin synthase (327 aa).

In terms of domain architecture, Radical SAM core spans 52 to 279; sequence TKVQLSTLVS…ASYVRLSAGR (228 aa). [4Fe-4S] cluster is bound by residues C67, C71, and C74. [2Fe-2S] cluster-binding residues include C111, C142, C202, and R274.

Belongs to the radical SAM superfamily. Biotin synthase family. In terms of assembly, homodimer. It depends on [4Fe-4S] cluster as a cofactor. [2Fe-2S] cluster is required as a cofactor.

It catalyses the reaction (4R,5S)-dethiobiotin + (sulfur carrier)-SH + 2 reduced [2Fe-2S]-[ferredoxin] + 2 S-adenosyl-L-methionine = (sulfur carrier)-H + biotin + 2 5'-deoxyadenosine + 2 L-methionine + 2 oxidized [2Fe-2S]-[ferredoxin]. It functions in the pathway cofactor biosynthesis; biotin biosynthesis; biotin from 7,8-diaminononanoate: step 2/2. Catalyzes the conversion of dethiobiotin (DTB) to biotin by the insertion of a sulfur atom into dethiobiotin via a radical-based mechanism. The polypeptide is Biotin synthase (Chromobacterium violaceum (strain ATCC 12472 / DSM 30191 / JCM 1249 / CCUG 213 / NBRC 12614 / NCIMB 9131 / NCTC 9757 / MK)).